The chain runs to 125 residues: Small ribosomal subunit protein uS12 (125 aa).

The residue at position 89 (Asp-89) is a 3-methylthioaspartic acid.

The protein belongs to the universal ribosomal protein uS12 family. As to quaternary structure, part of the 30S ribosomal subunit. Contacts proteins S8 and S17. May interact with IF1 in the 30S initiation complex.

Its function is as follows. With S4 and S5 plays an important role in translational accuracy. In terms of biological role, interacts with and stabilizes bases of the 16S rRNA that are involved in tRNA selection in the A site and with the mRNA backbone. Located at the interface of the 30S and 50S subunits, it traverses the body of the 30S subunit contacting proteins on the other side and probably holding the rRNA structure together. The combined cluster of proteins S8, S12 and S17 appears to hold together the shoulder and platform of the 30S subunit. This Clostridium kluyveri (strain ATCC 8527 / DSM 555 / NBRC 12016 / NCIMB 10680 / K1) protein is Small ribosomal subunit protein uS12.